The following is a 476-amino-acid chain: Calcium/calmodulin-dependent protein kinase type 1G (476 aa).

Residues 23 to 277 (FIFMEVLGSG…CEKALRHPWI (255 aa)) enclose the Protein kinase domain. ATP is bound by residues 29–37 (LGSGAFSEV) and Lys-52. Asp-143 acts as the Proton acceptor in catalysis. The interval 277 to 317 (IDGNTALHRDIYPSVSLQIQKNFAKSKWRQAFNAAAVVHHM) is autoinhibitory domain. The tract at residues 297–318 (KNFAKSKWRQAFNAAAVVHHMR) is calmodulin-binding. A disordered region spans residues 326–387 (SPSVRQEVEN…SSRPSAPGGR (62 aa)).

The protein belongs to the protein kinase superfamily. CAMK Ser/Thr protein kinase family. CaMK subfamily. Prenylated on Cys-473.

It localises to the cytoplasm. The protein resides in the golgi apparatus membrane. The protein localises to the cell membrane. The enzyme catalyses L-seryl-[protein] + ATP = O-phospho-L-seryl-[protein] + ADP + H(+). It carries out the reaction L-threonyl-[protein] + ATP = O-phospho-L-threonyl-[protein] + ADP + H(+). Activated by Ca(2+)/calmodulin. Binding of calmodulin is thought to result in a conformational change and leads to activation through phosphorylation by CAMKK1. Its function is as follows. Calcium/calmodulin-dependent protein kinase belonging to a proposed calcium-triggered signaling cascade. In vitro phosphorylates transcription factor CREB1. This Rattus norvegicus (Rat) protein is Calcium/calmodulin-dependent protein kinase type 1G (Camk1g).